The following is a 106-amino-acid chain: Large ribosomal subunit protein eL42 (106 aa).

It belongs to the eukaryotic ribosomal protein eL42 family.

The polypeptide is Large ribosomal subunit protein eL42 (RPL44) (Debaryomyces hansenii (strain ATCC 36239 / CBS 767 / BCRC 21394 / JCM 1990 / NBRC 0083 / IGC 2968) (Yeast)).